The chain runs to 198 residues: Peptidyl-tRNA hydrolase (198 aa).

TRNA is bound at residue Tyr16. His21 serves as the catalytic Proton acceptor. TRNA is bound by residues Tyr67, Asn69, and Asn115.

This sequence belongs to the PTH family. As to quaternary structure, monomer.

It localises to the cytoplasm. It carries out the reaction an N-acyl-L-alpha-aminoacyl-tRNA + H2O = an N-acyl-L-amino acid + a tRNA + H(+). In terms of biological role, hydrolyzes ribosome-free peptidyl-tRNAs (with 1 or more amino acids incorporated), which drop off the ribosome during protein synthesis, or as a result of ribosome stalling. Its function is as follows. Catalyzes the release of premature peptidyl moieties from peptidyl-tRNA molecules trapped in stalled 50S ribosomal subunits, and thus maintains levels of free tRNAs and 50S ribosomes. The sequence is that of Peptidyl-tRNA hydrolase from Gloeobacter violaceus (strain ATCC 29082 / PCC 7421).